Reading from the N-terminus, the 1040-residue chain is Multidrug resistance protein MdtB (1040 aa).

Helical transmembrane passes span 16–36 (FIMR…AGII), 347–367 (LMMA…NIPA), 369–389 (IIPG…MVFL), 396–416 (LTLM…IVVI), 440–460 (IGFT…PLLF), 472–492 (FAIT…TLTP), 537–557 (WLTL…WVFI), 863–883 (LGST…VLGI), 888–908 (FIHP…ALLA), 911–931 (IAGS…IGIV), 968–988 (ILMT…STGV), and 998–1018 (IGMV…TPVI).

Belongs to the resistance-nodulation-cell division (RND) (TC 2.A.6) family. MdtB subfamily. As to quaternary structure, part of a tripartite efflux system composed of MdtA, MdtB and MdtC. MdtB forms a heteromultimer with MdtC.

It localises to the cell inner membrane. Its function is as follows. The MdtABC tripartite complex confers resistance against novobiocin and deoxycholate. The chain is Multidrug resistance protein MdtB from Escherichia coli O7:K1 (strain IAI39 / ExPEC).